We begin with the raw amino-acid sequence, 41 residues long: Photosystem II reaction center protein Y (41 aa).

Met-1 bears the N-formylmethionine mark. The Lumenal segment spans residues 1–4 (MDWR). The chain crosses the membrane as a helical span at residues 5 to 23 (VLVVLLPVLLAAGWAVRNI). Residues 24-41 (LPYAVKQVQKLLQKAKAA) lie on the Cytoplasmic side of the membrane.

It belongs to the PsbY family. As to quaternary structure, PSII is composed of 1 copy each of membrane proteins PsbA, PsbB, PsbC, PsbD, PsbE, PsbF, PsbH, PsbI, PsbJ, PsbK, PsbL, PsbM, PsbT, PsbX, PsbY, PsbZ, Psb30/Ycf12, peripheral proteins PsbO, CyanoQ (PsbQ), PsbU, PsbV and a large number of cofactors. It forms dimeric complexes. This protein is only loosely associated with PSII, and is not often found in crystals. Found on the exterior of the PSII dimer, near cytochrome b559 (psbE and psbF). PSII binds multiple chlorophylls, carotenoids and specific lipids. serves as cofactor.

It localises to the cellular thylakoid membrane. Functionally, loosely associated component of the core of photosystem II, it is not always seen in crystals. PSII is a light-driven water plastoquinone oxidoreductase, using light energy to abstract electrons from H(2)O, generating a proton gradient subsequently used for ATP formation. In Thermosynechococcus vestitus (strain NIES-2133 / IAM M-273 / BP-1), this protein is Photosystem II reaction center protein Y.